Consider the following 694-residue polypeptide: DNA-binding protein RFX2 (694 aa).

Positions 174-249 (HLQWLLDNYE…YHYYGIRLKP (76 aa)) form a DNA-binding region, RFX-type winged-helix. Disordered stretches follow at residues 268 to 309 (QPIH…SQHH) and 659 to 694 (DDVS…MQEM). The span at 288 to 299 (NTANSSQHTSPE) shows a compositional bias: polar residues. Positions 300-309 (QSVAAQSQHH) are enriched in low complexity.

This sequence belongs to the RFX family. In terms of assembly, homodimer. Heterodimer; heterodimerizes with other rfx proteins.

It localises to the nucleus. The protein resides in the cytoplasm. Functionally, transcription factor that acts as a key regulator of ciliogenesis. Specifically regulates expression of genes required for cilium assembly and function. Recognizes and binds the X-box, a regulatory motif with DNA sequence 5'-GTNRCC(0-3N)RGYAAC-3' present on promoters. Required for neural tube closure and neural ciliogenesis. This chain is DNA-binding protein RFX2 (rfx2), found in Xenopus tropicalis (Western clawed frog).